The chain runs to 241 residues: Probable transcriptional regulatory protein CV_3123 (241 aa).

This sequence belongs to the TACO1 family.

It is found in the cytoplasm. In Chromobacterium violaceum (strain ATCC 12472 / DSM 30191 / JCM 1249 / CCUG 213 / NBRC 12614 / NCIMB 9131 / NCTC 9757 / MK), this protein is Probable transcriptional regulatory protein CV_3123.